A 505-amino-acid chain; its full sequence is Pup deamidase/depupylase (505 aa).

Residue 6 to 10 coordinates ATP; sequence GTEVE. Positions 8 and 93 each coordinate Mg(2+). Asp-95 functions as the Proton acceptor in the catalytic mechanism. Position 100 (Glu-100) interacts with Mg(2+). 102–103 provides a ligand contact to ATP; sequence SA. Mg(2+) is bound at residue His-156. The ATP site is built by Asn-158 and Arg-240. Position 242 (His-242) interacts with Mg(2+).

Belongs to the Pup ligase/Pup deamidase family. Pup deamidase subfamily. Interacts with the prokaryotic ubiquitin-like protein Pup. ATP is required as a cofactor.

It carries out the reaction [prokaryotic ubiquitin-like protein]-C-terminal-L-glutamine + H2O = [prokaryotic ubiquitin-like protein]-C-terminal-L-glutamate + NH4(+). The protein operates within protein degradation; proteasomal Pup-dependent pathway. Its function is as follows. Specifically catalyzes the deamidation of the C-terminal glutamine of the prokaryotic ubiquitin-like protein Pup to glutamate, thereby rendering Pup competent for conjugation. Also displays depupylase (DPUP) activity, removing conjugated Pup from target proteins; is thus involved in the recycling of Pup and may function similarly to deubiquitinases (DUBs) in eukaryotes to prevent or promote proteasomal degradation of certain proteins. The protein is Pup deamidase/depupylase (dop) of Mycobacterium tuberculosis (strain CDC 1551 / Oshkosh).